A 30-amino-acid chain; its full sequence is Ribosome-inactivating protein momorcochin-S (30 aa).

The protein belongs to the ribosome-inactivating protein family. Type 1 RIP subfamily. Glycosylated.

The catalysed reaction is Endohydrolysis of the N-glycosidic bond at one specific adenosine on the 28S rRNA.. In terms of biological role, inactivates eukaryotic 60S ribosomal subunits. This Momordica cochinchinensis (Spiny bitter cucumber) protein is Ribosome-inactivating protein momorcochin-S.